The sequence spans 149 residues: Transcriptional repressor NrdR (149 aa).

A zinc finger spans residues 3-34 (CPFCSAVDTKVIDSRLVAEGHQVRRRRECLLC). The region spanning 49 to 139 (PRVIKSNGSR…VYRSFEDIRE (91 aa)) is the ATP-cone domain.

Belongs to the NrdR family. Requires Zn(2+) as cofactor.

Negatively regulates transcription of bacterial ribonucleotide reductase nrd genes and operons by binding to NrdR-boxes. The protein is Transcriptional repressor NrdR of Aeromonas hydrophila subsp. hydrophila (strain ATCC 7966 / DSM 30187 / BCRC 13018 / CCUG 14551 / JCM 1027 / KCTC 2358 / NCIMB 9240 / NCTC 8049).